The chain runs to 490 residues: Betaine aldehyde dehydrogenase (490 aa).

K(+)-binding residues include Ser-26, Ile-27, and Asp-93. 150–152 (GAW) contributes to the NAD(+) binding site. Lys-162 functions as the Charge relay system in the catalytic mechanism. NAD(+) is bound by residues 176–179 (KPSE) and 230–233 (GVET). Position 246 (Leu-246) interacts with K(+). Glu-252 serves as the catalytic Proton acceptor. 3 residues coordinate NAD(+): Gly-254, Cys-286, and Glu-387. Residue Cys-286 is the Nucleophile of the active site. Cys-286 carries the cysteine sulfenic acid (-SOH) modification. Residues Lys-457 and Gly-460 each contribute to the K(+) site. Glu-464 acts as the Charge relay system in catalysis.

The protein belongs to the aldehyde dehydrogenase family. As to quaternary structure, dimer of dimers. K(+) serves as cofactor.

The catalysed reaction is betaine aldehyde + NAD(+) + H2O = glycine betaine + NADH + 2 H(+). It functions in the pathway amine and polyamine biosynthesis; betaine biosynthesis via choline pathway; betaine from betaine aldehyde: step 1/1. Its function is as follows. Involved in the biosynthesis of the osmoprotectant glycine betaine. Catalyzes the irreversible oxidation of betaine aldehyde to the corresponding acid. This is Betaine aldehyde dehydrogenase from Acinetobacter baumannii (strain AB307-0294).